Consider the following 677-residue polypeptide: Transketolase 1 (677 aa).

H27 serves as a coordination point for substrate. Thiamine diphosphate-binding positions include H66 and 114 to 116 (GPL). D155 provides a ligand contact to Mg(2+). Thiamine diphosphate contacts are provided by G156 and N185. Mg(2+) is bound by residues N185 and I187. H261, R356, and S383 together coordinate substrate. H261 lines the thiamine diphosphate pocket. Positions 415 and 442 each coordinate thiamine diphosphate. E415 serves as the catalytic Proton donor. 3 residues coordinate substrate: H466, D474, and R525.

Belongs to the transketolase family. Homodimer. It depends on Mg(2+) as a cofactor. Requires Ca(2+) as cofactor. Mn(2+) is required as a cofactor. Co(2+) serves as cofactor. The cofactor is thiamine diphosphate.

It catalyses the reaction D-sedoheptulose 7-phosphate + D-glyceraldehyde 3-phosphate = aldehydo-D-ribose 5-phosphate + D-xylulose 5-phosphate. Functionally, catalyzes the transfer of a two-carbon ketol group from a ketose donor to an aldose acceptor, via a covalent intermediate with the cofactor thiamine pyrophosphate. In Candida albicans (Yeast), this protein is Transketolase 1 (TKT1).